The primary structure comprises 510 residues: Calcium-dependent lipid-binding protein (510 aa).

A helical transmembrane segment spans residues 1 to 21 (MGLISGILFGIIFGVALMAGW). SMP-LTD domains are found at residues 66 to 248 (AFEQ…VPIG) and 66 to 250 (AFEQ…IGGI). The phospholipid binding stretch occupies residues 226–488 (DDTVDTIVKD…FMGRTITGQS (263 aa)). 2 C2 domains span residues 242–362 (RIVV…ELEL) and 246–364 (PIGG…ELNL). Ca(2+) contacts are provided by K278, E279, D285, D333, K334, D335, D339, and E340. The stretch at 390–417 (EFNKEEQMAALEDEKKIMEERKRLKEAG) forms a coiled coil. The 40-residue stretch at 461-500 (MVGSGFGAVGSGLSKAGRFMGRTITGQSSKRSGSSTPVNT) folds into the C2 3 domain. Residues 484–510 (ITGQSSKRSGSSTPVNTVPENDGAKQQ) are disordered.

This sequence belongs to the synaptotagmin family. As to quaternary structure, interacts with the biotrophic pathogenic fungi Microbotryum violaceum effector MVLG_01732. The cofactor is Ca(2+). As to expression, mostly expressed in rosette leaves and flowers, to lower extent, in cauline leaves, roots and stems, and, at low levels, in siliques.

Its subcellular location is the nucleus membrane. In terms of biological role, may be involved in membrane trafficking. Acts as a repressor of abiotic stress (e.g. drought and salt) responses by binding specifically to the promoter of THAS1 to regulate its transcription. Binds to membrane lipid ceramides. The polypeptide is Calcium-dependent lipid-binding protein (Arabidopsis thaliana (Mouse-ear cress)).